The chain runs to 306 residues: Stimulator of interferon genes protein 5 (306 aa).

The disordered stretch occupies residues 1 to 50; that stretch reads MMSNDSQSEKRTAKWTGSGTPIAEGEESSSPSAHQTRQKATAADDDDDQQ. 2',3'-cGAMP is bound by residues Tyr119, Arg180, and Arg186.

The protein belongs to the STING family.

Functionally, facilitator of innate immune signaling that acts as a sensor of second messenger signals produced by cyclic GMP-AMP synthase-like receptors (cGLRs) and promotes the production of type I interferon. Innate immune response is triggered in response to nucleotides from viruses and bacteria delivered to the cytoplasm. Acts by binding cyclic dinucleotides: recognizes and binds 2'-3' linked cGAMP (2'-3'-cGAMP), a second messengers produced by cGLRs in response to nucleotides in the cytosol, such as double-stranded RNA (dsRNA). Upon binding to 2'-3'-cGAMP, oligomerizes and promotes the recruitment and subsequent activation of the transcription factor IRF3 to induce expression of type I interferon. This is Stimulator of interferon genes protein 5 from Stylophora pistillata (Smooth cauliflower coral).